The chain runs to 144 residues: MTEVNINVTEIMEALPHRYPFLLVDRVIDIADDEITAIKNVTINEEFFQGHFPQYPVMPGVLIMEALAQAAGVLELSKPENKGKLVFYAGMDNVKYKKQVTPGDQLVLHAKFIKRRGPIAVVEAEATVDGKLAAKGTLTFALGK.

H51 is an active-site residue.

This sequence belongs to the thioester dehydratase family. FabZ subfamily.

The protein resides in the cytoplasm. It carries out the reaction a (3R)-hydroxyacyl-[ACP] = a (2E)-enoyl-[ACP] + H2O. Its function is as follows. Involved in unsaturated fatty acids biosynthesis. Catalyzes the dehydration of short chain beta-hydroxyacyl-ACPs and long chain saturated and unsaturated beta-hydroxyacyl-ACPs. This is 3-hydroxyacyl-[acyl-carrier-protein] dehydratase FabZ from Lactococcus lactis subsp. cremoris (strain SK11).